Reading from the N-terminus, the 138-residue chain is Large ribosomal subunit protein uL16 (138 aa).

Positions 1-17 (MLIPRKVKHRKQHHPRQ) are enriched in basic residues. A disordered region spans residues 1–22 (MLIPRKVKHRKQHHPRQRGIAS).

It belongs to the universal ribosomal protein uL16 family. Part of the 50S ribosomal subunit.

Its function is as follows. Binds 23S rRNA and is also seen to make contacts with the A and possibly P site tRNAs. This chain is Large ribosomal subunit protein uL16, found in Mycobacterium avium (strain 104).